The sequence spans 378 residues: MKITAVRTHLLEHRLDTPFESASMRFDRRAHVLVEIECDDGTVGWGECLGPARPNAAVVQAYSGWLIGQDPRQTEKIWAVLYNALRDQGQRGLSLTALSGIDIALWDIKGKHYGASISMLLGGRWRESVRAYATGSFKRDNVDRVSDNASEMAERRAEGFHACKIKIGFGVEEDLRVIAAVREAIGPDMRLMIDANHGYTVTEAITLGDRAAGFGIDWFEEPVVPEQLDAYARVRAGQPIPVAGGETWHGRYGMWQALSAGAVDILQPDLCGCGGFSEIQKIATLATLHGVRIVPHVWGTGVQIAAALQFMAAMTPDPVRVNPIEPIMEFDRTHNPFRQAVLREPLEAVNGVVTIPDGPGLGIEINRDALTEFRMPDP.

D194, E220, and E246 together coordinate Mg(2+). H296 functions as the Proton acceptor in the catalytic mechanism.

The protein belongs to the mandelate racemase/muconate lactonizing enzyme family. In terms of assembly, homooctamer. It depends on Mg(2+) as a cofactor.

It carries out the reaction D-glucaro-1,4-lactone = 5-dehydro-4-deoxy-D-glucarate + H(+). The enzyme catalyses D-galactaro-1,4-lactone = 5-dehydro-4-deoxy-D-glucarate + H(+). It participates in carbohydrate acid metabolism; D-galacturonate degradation via prokaryotic oxidative pathway. Catalyzes the ring opening of D-galactaro-1,4-lactone to yield 5-keto-4-deoxy-D-glucarate (KDG) via a beta-elimination reaction. This is a step in the oxidative degradation pathway of D-galacturonate, which allows A.tumefaciens to utilize D-galacturonate as a sole carbon source. To a lesser extent, can also use D-glucaro-1,4-lactone as substrate to produce KDG, but cannot use D-galactaro-1,5-lactone, D-glucaro-6,3-lactone and linear D-glucarate. The chain is D-galactarolactone cycloisomerase (gci) from Agrobacterium fabrum (strain C58 / ATCC 33970) (Agrobacterium tumefaciens (strain C58)).